The following is a 193-amino-acid chain: Peptidyl-tRNA hydrolase (193 aa).

Residue Tyr-21 participates in tRNA binding. Catalysis depends on His-26, which acts as the Proton acceptor. TRNA-binding residues include Tyr-72, Asn-74, and Asn-120.

This sequence belongs to the PTH family. In terms of assembly, monomer.

Its subcellular location is the cytoplasm. It carries out the reaction an N-acyl-L-alpha-aminoacyl-tRNA + H2O = an N-acyl-L-amino acid + a tRNA + H(+). Hydrolyzes ribosome-free peptidyl-tRNAs (with 1 or more amino acids incorporated), which drop off the ribosome during protein synthesis, or as a result of ribosome stalling. In terms of biological role, catalyzes the release of premature peptidyl moieties from peptidyl-tRNA molecules trapped in stalled 50S ribosomal subunits, and thus maintains levels of free tRNAs and 50S ribosomes. The polypeptide is Peptidyl-tRNA hydrolase (Nocardia farcinica (strain IFM 10152)).